The following is a 488-amino-acid chain: Glycogen synthase (488 aa).

Residue Arg20 participates in ADP-alpha-D-glucose binding.

Belongs to the glycosyltransferase 1 family. Bacterial/plant glycogen synthase subfamily.

It catalyses the reaction [(1-&gt;4)-alpha-D-glucosyl](n) + ADP-alpha-D-glucose = [(1-&gt;4)-alpha-D-glucosyl](n+1) + ADP + H(+). The protein operates within glycan biosynthesis; glycogen biosynthesis. In terms of biological role, synthesizes alpha-1,4-glucan chains using ADP-glucose. This Chlorobaculum parvum (strain DSM 263 / NCIMB 8327) (Chlorobium vibrioforme subsp. thiosulfatophilum) protein is Glycogen synthase.